We begin with the raw amino-acid sequence, 383 residues long: F-box/kelch-repeat protein At4g19330 (383 aa).

Residues Met-1 to Ser-27 form a disordered region. An F-box domain is found at Pro-28–Thr-79. 3 Kelch repeats span residues Glu-147–Gly-192, Lys-193–Thr-239, and Ser-272–Gly-318.

In terms of biological role, involved in seed germination. This chain is F-box/kelch-repeat protein At4g19330, found in Arabidopsis thaliana (Mouse-ear cress).